Here is a 332-residue protein sequence, read N- to C-terminus: Lipoyl synthase (332 aa).

7 residues coordinate [4Fe-4S] cluster: Cys74, Cys79, Cys85, Cys100, Cys104, Cys107, and Ser314. Positions 85-303 constitute a Radical SAM core domain; sequence CFGKGTATFM…EQEAYRMGFS (219 aa).

The protein belongs to the radical SAM superfamily. Lipoyl synthase family. [4Fe-4S] cluster is required as a cofactor.

It localises to the cytoplasm. It carries out the reaction [[Fe-S] cluster scaffold protein carrying a second [4Fe-4S](2+) cluster] + N(6)-octanoyl-L-lysyl-[protein] + 2 oxidized [2Fe-2S]-[ferredoxin] + 2 S-adenosyl-L-methionine + 4 H(+) = [[Fe-S] cluster scaffold protein] + N(6)-[(R)-dihydrolipoyl]-L-lysyl-[protein] + 4 Fe(3+) + 2 hydrogen sulfide + 2 5'-deoxyadenosine + 2 L-methionine + 2 reduced [2Fe-2S]-[ferredoxin]. It participates in protein modification; protein lipoylation via endogenous pathway; protein N(6)-(lipoyl)lysine from octanoyl-[acyl-carrier-protein]: step 2/2. Functionally, catalyzes the radical-mediated insertion of two sulfur atoms into the C-6 and C-8 positions of the octanoyl moiety bound to the lipoyl domains of lipoate-dependent enzymes, thereby converting the octanoylated domains into lipoylated derivatives. This chain is Lipoyl synthase, found in Verminephrobacter eiseniae (strain EF01-2).